The primary structure comprises 124 residues: Oligopeptide-binding protein OppA (124 aa).

Belongs to the bacterial solute-binding protein 5 family. The complex is composed of two ATP-binding proteins (OppD and OppF), two transmembrane proteins (OppB and OppC) and a solute-binding protein (OppA).

It is found in the cell membrane. In terms of biological role, part of the ABC transporter complex OppABCDF involved in the uptake of oligopeptides. In Lactococcus lactis subsp. cremoris (Streptococcus cremoris), this protein is Oligopeptide-binding protein OppA (oppA).